A 227-amino-acid chain; its full sequence is Germin-like protein subfamily T member 3 (227 aa).

An N-terminal signal peptide occupies residues 1-26 (MAHISQISSFLSIVLIFLALCITLFT). Cys-44 and Cys-59 are joined by a disulfide. Residues 71-219 (SGLNTPLNTS…AFKADSKTIN (149 aa)) form the Cupin type-1 domain. A glycan (N-linked (GlcNAc...) asparagine) is linked at Asn-78. 3 residues coordinate Mn(2+): His-119, His-121, and Glu-126. A glycan (N-linked (GlcNAc...) asparagine) is linked at Asn-143. His-165 lines the Mn(2+) pocket.

It belongs to the germin family. As to quaternary structure, oligomer (believed to be a pentamer but probably hexamer).

Its subcellular location is the secreted. The protein localises to the extracellular space. The protein resides in the apoplast. Its function is as follows. May play a role in plant defense. Probably has no oxalate oxidase activity even if the active site is conserved. In Arabidopsis thaliana (Mouse-ear cress), this protein is Germin-like protein subfamily T member 3.